A 264-amino-acid chain; its full sequence is Type III pantothenate kinase (264 aa).

An ATP-binding site is contributed by 6 to 13 (DIGNTQTV). Substrate-binding positions include Y100 and 107–110 (GADR). D109 acts as the Proton acceptor in catalysis. Residue D129 coordinates K(+). T132 contributes to the ATP binding site. A substrate-binding site is contributed by T185.

It belongs to the type III pantothenate kinase family. Homodimer. NH4(+) serves as cofactor. The cofactor is K(+).

The protein resides in the cytoplasm. The enzyme catalyses (R)-pantothenate + ATP = (R)-4'-phosphopantothenate + ADP + H(+). It functions in the pathway cofactor biosynthesis; coenzyme A biosynthesis; CoA from (R)-pantothenate: step 1/5. Its function is as follows. Catalyzes the phosphorylation of pantothenate (Pan), the first step in CoA biosynthesis. This chain is Type III pantothenate kinase, found in Rubrobacter xylanophilus (strain DSM 9941 / JCM 11954 / NBRC 16129 / PRD-1).